Reading from the N-terminus, the 215-residue chain is MKIFIDTANVEEIRKASKLGVLAGVTTNPSLIAKEGRDIKEVIEEICSIVDGSISAEVMALECDEMVREGRELAKIHKNIVIKIPMCEEGLKAVKVLASEGIRTNVTLIFSPLQALLAARAGASFVSPFLGRLDDIGNPGIEIVTQIAEMFALHGIDTEIISASVRNPMHVLDSAMAGSHIATIPYNVILQMVKHPLTDAGMKKFIEDYNKAFNK.

Lys-83 serves as the catalytic Schiff-base intermediate with substrate.

The protein belongs to the transaldolase family. Type 3B subfamily.

The protein resides in the cytoplasm. It carries out the reaction D-sedoheptulose 7-phosphate + D-glyceraldehyde 3-phosphate = D-erythrose 4-phosphate + beta-D-fructose 6-phosphate. It functions in the pathway carbohydrate degradation; pentose phosphate pathway; D-glyceraldehyde 3-phosphate and beta-D-fructose 6-phosphate from D-ribose 5-phosphate and D-xylulose 5-phosphate (non-oxidative stage): step 2/3. Functionally, transaldolase is important for the balance of metabolites in the pentose-phosphate pathway. This is Probable transaldolase from Clostridium perfringens (strain ATCC 13124 / DSM 756 / JCM 1290 / NCIMB 6125 / NCTC 8237 / Type A).